The following is a 105-amino-acid chain: Met repressor (105 aa).

This sequence belongs to the MetJ family. Homodimer.

It is found in the cytoplasm. This regulatory protein, when combined with SAM (S-adenosylmethionine) represses the expression of the methionine regulon and of enzymes involved in SAM synthesis. This Histophilus somni (strain 129Pt) (Haemophilus somnus) protein is Met repressor.